A 508-amino-acid polypeptide reads, in one-letter code: Steroid 17-alpha-hydroxylase/17,20 lyase (508 aa).

Substrate is bound at residue Asn202. A heme-binding site is contributed by Cys442.

The protein belongs to the cytochrome P450 family. Heme is required as a cofactor.

The protein resides in the endoplasmic reticulum membrane. It localises to the microsome membrane. It carries out the reaction a C21-steroid + reduced [NADPH--hemoprotein reductase] + O2 = a 17alpha-hydroxy-C21-steroid + oxidized [NADPH--hemoprotein reductase] + H2O + H(+). The enzyme catalyses progesterone + reduced [NADPH--hemoprotein reductase] + O2 = 17alpha-hydroxyprogesterone + oxidized [NADPH--hemoprotein reductase] + H2O + H(+). It catalyses the reaction pregnenolone + reduced [NADPH--hemoprotein reductase] + O2 = 17alpha-hydroxypregnenolone + oxidized [NADPH--hemoprotein reductase] + H2O + H(+). The catalysed reaction is 17alpha-hydroxyprogesterone + reduced [NADPH--hemoprotein reductase] + O2 = androst-4-ene-3,17-dione + acetate + oxidized [NADPH--hemoprotein reductase] + H2O + 2 H(+). It carries out the reaction 17alpha-hydroxyprogesterone + reduced [NADPH--hemoprotein reductase] + O2 = 16alpha,17alpha-dihydroxyprogesterone + oxidized [NADPH--hemoprotein reductase] + H2O + H(+). The enzyme catalyses 16alpha,17alpha-dihydroxyprogesterone + reduced [NADPH--hemoprotein reductase] + O2 = 6beta,16alpha,17alpha-trihydroxyprogesterone + oxidized [NADPH--hemoprotein reductase] + H2O + H(+). It catalyses the reaction 17alpha-hydroxypregnenolone + reduced [NADPH--hemoprotein reductase] + O2 = 3beta-hydroxyandrost-5-en-17-one + acetate + oxidized [NADPH--hemoprotein reductase] + H2O + 2 H(+). The catalysed reaction is 16alpha,17alpha-dihydroxypregnenolone + reduced [NADPH--hemoprotein reductase] + O2 = 3beta,16alpha-dihydroxy-androst-5-en-17-one + acetate + oxidized [NADPH--hemoprotein reductase] + H2O + 2 H(+). It carries out the reaction 3beta-hydroxyandrost-5-en-17-one + reduced [NADPH--hemoprotein reductase] + O2 = 3beta,16alpha-dihydroxy-androst-5-en-17-one + oxidized [NADPH--hemoprotein reductase] + H2O + H(+). The enzyme catalyses androst-4-ene-3,17-dione + reduced [NADPH--hemoprotein reductase] + O2 = 16alpha-hydroxyandrost-4-ene-3,17-dione + oxidized [NADPH--hemoprotein reductase] + H2O + H(+). Its pathway is steroid hormone biosynthesis. It participates in steroid biosynthesis; glucocorticoid biosynthesis. Regulated predominantly by intracellular cAMP levels. The 17,20-lyase activity is stimulated by cytochrome b5, which acts as an allosteric effector increasing the Vmax of the lyase activity. Its function is as follows. A cytochrome P450 monooxygenase involved in corticoid and androgen biosynthesis. Catalyzes 17-alpha hydroxylation of C21 steroids, which is common for both pathways. A second oxidative step, required only for androgen synthesis, involves an acyl-carbon cleavage. The 17-alpha hydroxy intermediates, as part of adrenal glucocorticoids biosynthesis pathway, are precursors of cortisol. Hydroxylates steroid hormones, pregnenolone and progesterone to form 17-alpha hydroxy metabolites, followed by the cleavage of the C17-C20 bond to form C19 steroids, dehydroepiandrosterone (DHEA) and androstenedione. Has 16-alpha hydroxylase activity. Catalyzes 16-alpha hydroxylation of 17-alpha hydroxy pregnenolone, followed by the cleavage of the C17-C20 bond to form 16-alpha-hydroxy DHEA. Also 16-alpha hydroxylates androgens, relevant for estriol synthesis. Mechanistically, uses molecular oxygen inserting one oxygen atom into a substrate, and reducing the second into a water molecule, with two electrons provided by NADPH via cytochrome P450 reductase (CPR; NADPH-ferrihemoprotein reductase). The protein is Steroid 17-alpha-hydroxylase/17,20 lyase (CYP17A1) of Felis catus (Cat).